The primary structure comprises 211 residues: Uracil phosphoribosyltransferase (211 aa).

Residue 30-34 (KGLVR) coordinates GTP. 5-phospho-alpha-D-ribose 1-diphosphate contacts are provided by residues Arg-79, Arg-104, and 133–141 (DPMLATGTT). Residues Ile-197 and 202-204 (GDA) each bind uracil. Asp-203 contributes to the 5-phospho-alpha-D-ribose 1-diphosphate binding site.

It belongs to the UPRTase family. Requires Mg(2+) as cofactor.

It catalyses the reaction UMP + diphosphate = 5-phospho-alpha-D-ribose 1-diphosphate + uracil. Its pathway is pyrimidine metabolism; UMP biosynthesis via salvage pathway; UMP from uracil: step 1/1. With respect to regulation, allosterically activated by GTP. Its function is as follows. Catalyzes the conversion of uracil and 5-phospho-alpha-D-ribose 1-diphosphate (PRPP) to UMP and diphosphate. This chain is Uracil phosphoribosyltransferase, found in Pyrobaculum arsenaticum (strain DSM 13514 / JCM 11321 / PZ6).